A 104-amino-acid polypeptide reads, in one-letter code: Urease subunit beta (104 aa).

It belongs to the urease beta subunit family. Heterotrimer of UreA (gamma), UreB (beta) and UreC (alpha) subunits. Three heterotrimers associate to form the active enzyme.

Its subcellular location is the cytoplasm. It catalyses the reaction urea + 2 H2O + H(+) = hydrogencarbonate + 2 NH4(+). The protein operates within nitrogen metabolism; urea degradation; CO(2) and NH(3) from urea (urease route): step 1/1. This chain is Urease subunit beta, found in Methylocella silvestris (strain DSM 15510 / CIP 108128 / LMG 27833 / NCIMB 13906 / BL2).